A 313-amino-acid polypeptide reads, in one-letter code: Olfactory receptor 10P1 (313 aa).

The Extracellular segment spans residues 1 to 25 (MAGENHTTLPEFLLLGFSDLKALQG). Residue asparagine 5 is glycosylated (N-linked (GlcNAc...) asparagine). A helical transmembrane segment spans residues 26–46 (PLFWVVLLVYLVTLLGNSLII). Residues 47–54 (LLTQVSPA) lie on the Cytoplasmic side of the membrane. The helical transmembrane segment at 55 to 75 (LHSPMYFFLRQLSVVELFYTT) threads the bilayer. Residues 76 to 100 (DIVPRTLANLGSPHPQAISFQGCAA) are Extracellular-facing. The helical transmembrane segment at 101–121 (QMYVFIVLGISECCLLTAMAY) threads the bilayer. The Cytoplasmic portion of the chain corresponds to 122-140 (DRYVAICQPLRYSTLLSPR). The chain crosses the membrane as a helical span at residues 141–161 (ACMAMVGTSWLTGIITATTHA). The Extracellular segment spans residues 162–198 (SLIFSLPFRSHPIIPHFLCDILPVLRLASAGKHRSEI). A helical membrane pass occupies residues 199–218 (SVMTATIVFIMIPFSLIVTS). The Cytoplasmic portion of the chain corresponds to 219–238 (YIRILGAILAMASTQSRRKV). A helical transmembrane segment spans residues 239 to 259 (FSTCSSHLLVVSLFFGTASIT). Over 260–272 (YIRPQAGSSVTTD) the chain is Extracellular. The helical transmembrane segment at 273–293 (RVLSLFYTVITPMLNPIIYTL) threads the bilayer. The Cytoplasmic portion of the chain corresponds to 294-313 (RNKDVRRALRHLVKRQRPSP).

The protein belongs to the G-protein coupled receptor 1 family.

It is found in the cell membrane. Odorant receptor. In Homo sapiens (Human), this protein is Olfactory receptor 10P1 (OR10P1).